Here is a 125-residue protein sequence, read N- to C-terminus: Small ribosomal subunit protein uS13 (125 aa).

Positions 97–125 (PVRGQKTRSNARTRKGPRPSRIKTKKKSS) are disordered. Positions 101-125 (QKTRSNARTRKGPRPSRIKTKKKSS) are enriched in basic residues.

This sequence belongs to the universal ribosomal protein uS13 family. Part of the 30S ribosomal subunit. Forms a loose heterodimer with protein S19. Forms two bridges to the 50S subunit in the 70S ribosome.

Its function is as follows. Located at the top of the head of the 30S subunit, it contacts several helices of the 16S rRNA. In the 70S ribosome it contacts the 23S rRNA (bridge B1a) and protein L5 of the 50S subunit (bridge B1b), connecting the 2 subunits; these bridges are implicated in subunit movement. Contacts the tRNAs in the A and P-sites. The protein is Small ribosomal subunit protein uS13 of Thermotoga maritima (strain ATCC 43589 / DSM 3109 / JCM 10099 / NBRC 100826 / MSB8).